The sequence spans 93 residues: DNA-binding protein Fis (93 aa).

The H-T-H motif DNA-binding region spans 74-93 (QTRAALMMGINRGTLRKKLK).

It belongs to the transcriptional regulatory Fis family. Homodimer.

Its function is as follows. Activates ribosomal RNA transcription. Plays a direct role in upstream activation of rRNA promoters. The sequence is that of DNA-binding protein Fis from Klebsiella pneumoniae.